Reading from the N-terminus, the 620-residue chain is Extensin (620 aa).

Residues 1–20 (MKLSTLFALVLLLQSTAILS) form the signal peptide. Over residues 34–45 (LPPPVTSQPPPS) the composition is skewed to pro residues. Residues 34–620 (LPPPVTSQPP…PPYGLLLSTP (587 aa)) form a disordered region. An H-A-P-P repeat occupies 70–73 (HAPP). Residues 106–129 (NPPPSPVISPSHPPPSYGAPPPSH) show a composition bias toward pro residues. The span at 145 to 163 (SHGHAPPSGGHTPPRGQHP) shows a compositional bias: low complexity. The stretch at 148–151 (HAPP) is one H-A-P-P repeat. The span at 164-177 (PSHRRPSPPSRHGH) shows a compositional bias: basic residues. The span at 178 to 219 (PPPPTYAQPPPTPIYSPSPQVQPPPTYSPPPPTHVQPTPSPP) shows a compositional bias: pro residues. Residues 205 to 620 (SPPPPTHVQP…PPYGLLLSTP (416 aa)) form a contains the Ser-Pro(4) repeats region. A run of 2 repeats spans residues 229–235 (THRHAPP) and 236–242 (THRHAPP). A compositionally biased stretch (basic residues) spans 229–241 (THRHAPPTHRHAP). The segment at 229–242 (THRHAPPTHRHAPP) is 2 X 7 AA tandem repeats of T-H-R-H-A-P-P. Pro residues-rich tracts occupy residues 251-552 (HLPP…PPHW) and 562-613 (GQPP…PPPY). The 3 X approximate tandem repeats stretch occupies residues 499-600 (PPTFSPPPPR…PTPTYGQPPS (102 aa)).

Post-translationally, hydroxylated on proline residues in the S-P-P-P-P repeat. In terms of processing, O-glycosylated on hydroxyprolines. As to expression, expressed in the tip of the emerging lateral roots.

Its subcellular location is the secreted. It is found in the primary cell wall. In terms of biological role, has a specialized structural function, possibly in the mechanical penetration of the cortex and epidermis of the main root. The chain is Extensin (HRGPNT3) from Nicotiana tabacum (Common tobacco).